The sequence spans 463 residues: uncharacterized protein (463 aa).

It belongs to the UbiD family.

This is an uncharacterized protein from Rhodospirillum rubrum.